A 745-amino-acid chain; its full sequence is Aminopeptidase NAALADL1 (745 aa).

The Cytoplasmic portion of the chain corresponds to 1–6; that stretch reads MHWAKI. Residues 7–28 form a helical; Signal-anchor for type II membrane protein membrane-spanning segment; it reads LGVGIGAAALLGLGIILGHFAI. The Extracellular segment spans residues 29–745; it reads PKATEPLASS…AATLQPVTDL (717 aa). Asn-128, Asn-141, and Asn-235 each carry an N-linked (GlcNAc...) asparagine glycan. Ca(2+)-binding residues include Thr-263 and Leu-266. Residues Asn-279, Asn-304, and Asn-350 are each glycosylated (N-linked (GlcNAc...) asparagine). An intrachain disulfide couples Cys-301 to Cys-318. 2 residues coordinate Zn(2+): His-373 and Asp-383. Catalysis depends on Glu-421, which acts as the Proton donor/acceptor. Glu-422 serves as a coordination point for Zn(2+). Ca(2+) contacts are provided by Glu-430 and Glu-433. Asp-450 contributes to the Zn(2+) binding site. 2 N-linked (GlcNAc...) asparagine glycosylation sites follow: Asn-456 and Asn-497. His-550 provides a ligand contact to Zn(2+). 2 N-linked (GlcNAc...) asparagine glycosylation sites follow: Asn-593 and Asn-620.

Belongs to the peptidase M28 family. M28B subfamily. Homodimer. Zn(2+) serves as cofactor. N-glycosylated. In terms of tissue distribution, detected on apical villi on the brush border membrane of ileum enterocytes (at protein level). Mainly expressed in the distal small intestine.

The protein localises to the apical cell membrane. Its function is as follows. Aminopeptidase with broad substrate specificity. Has lower activity with substrates that have Asp or Glu in the P2' position, or Pro in the P3' position. Lacks activity with substrates that have both Pro in the P3' position and Asp or Glu in the P2' position. Lacks carboxypeptidase activity. Lacks dipeptidyl-peptidase IV type activity. The protein is Aminopeptidase NAALADL1 (Naaladl1) of Rattus norvegicus (Rat).